A 2343-amino-acid chain; its full sequence is Pecanex-like protein 1 (2343 aa).

The next 2 membrane-spanning stretches (helical) occupy residues 33–53 (ALHL…YMAL) and 57–77 (MIIV…LKMV). Disordered regions lie at residues 98–163 (FTDQ…GSSR), 271–290 (SHSY…SSSA), 306–691 (QQQR…TRAR), and 749–826 (TRSR…QGQQ). Polar residues predominate over residues 143-163 (SSRNSYAGLDPSNQIGSGSSR). Residues 272–282 (HSYRKEHRPRG) show a composition bias toward basic residues. The segment covering 372 to 390 (SLRSLSTRSSGSTESYCSG) has biased composition (low complexity). Over residues 396-412 (NSTLSSYKSEQTSSTHI) the composition is skewed to polar residues. 3 stretches are compositionally biased toward basic and acidic residues: residues 416 to 457 (LSEH…DKTA), 507 to 521 (RPPE…EQGE), and 530 to 546 (KVCK…DVRP). Over residues 556 to 571 (TSAHKPGRRRTGKKRA) the composition is skewed to basic residues. 3 stretches are compositionally biased toward low complexity: residues 624-637 (SDSS…SCQS), 769-780 (AATGAAQASEEA), and 809-826 (TLLI…QGQQ). Transmembrane regions (helical) follow at residues 978–998 (FWIL…LLAL), 1009–1029 (ILAV…LIQG), 1034–1054 (IWVF…LKSV), 1068–1088 (IIAY…WLLD), 1118–1138 (LVIV…LPQV), 1162–1182 (LLAA…LYGL), 1195–1215 (HIPV…YHLS), 1268–1288 (LVVC…TVFT), 1296–1316 (YVLY…LPQV), 1406–1426 (SFSS…FFKF), 1434–1454 (TMLL…ELLY), 1458–1478 (FVYT…HAFA), and 1493–1513 (AVVS…AIFI). The interval 2050 to 2120 (EDSDTGGGTS…VQSSLVRQSP (71 aa)) is disordered. 2 stretches are compositionally biased toward polar residues: residues 2060-2080 (CPAN…QGST) and 2094-2117 (PTTS…SLVR).

It belongs to the pecanex family. Specifically expressed in the germ line and not in the somatic cells of the testis, reaching its peak at the pachytene stage of the meiotic prophase. Detected in pachytene spermatocytes and round spermatids (at protein level).

It is found in the membrane. The polypeptide is Pecanex-like protein 1 (Rattus norvegicus (Rat)).